We begin with the raw amino-acid sequence, 201 residues long: Proteasome subunit beta 1 (201 aa).

Methionine 1 is a propeptide (removed in mature form; by autocatalysis). The active-site Nucleophile is threonine 2.

This sequence belongs to the peptidase T1B family. In terms of assembly, the 20S proteasome core is composed of 14 alpha and 14 beta subunits that assemble into four stacked heptameric rings, resulting in a barrel-shaped structure. The two inner rings, each composed of seven catalytic beta subunits, are sandwiched by two outer rings, each composed of seven alpha subunits. The catalytic chamber with the active sites is on the inside of the barrel. Has a gated structure, the ends of the cylinder being occluded by the N-termini of the alpha-subunits. Is capped at one or both ends by the proteasome regulatory ATPase, PAN.

Its subcellular location is the cytoplasm. The catalysed reaction is Cleavage of peptide bonds with very broad specificity.. The formation of the proteasomal ATPase PAN-20S proteasome complex, via the docking of the C-termini of PAN into the intersubunit pockets in the alpha-rings, triggers opening of the gate for substrate entry. Interconversion between the open-gate and close-gate conformations leads to a dynamic regulation of the 20S proteasome proteolysis activity. Functionally, component of the proteasome core, a large protease complex with broad specificity involved in protein degradation. The sequence is that of Proteasome subunit beta 1 from Pyrobaculum calidifontis (strain DSM 21063 / JCM 11548 / VA1).